A 358-amino-acid chain; its full sequence is Probable anti-sigma-M factor YhdL (358 aa).

A helical transmembrane segment spans residues Ile-74–Tyr-96.

As to quaternary structure, the N-terminus of YhdL interacts with sigma-M. YhdL interacts specifically with YhdK.

It localises to the membrane. This Bacillus subtilis (strain 168) protein is Probable anti-sigma-M factor YhdL (yhdL).